The following is an 89-amino-acid chain: Large ribosomal subunit protein bL27 (89 aa).

Residues 1–21 (MAHKKAGGSSRNGRDSAGRRL) are disordered.

It belongs to the bacterial ribosomal protein bL27 family.

The sequence is that of Large ribosomal subunit protein bL27 from Roseobacter denitrificans (strain ATCC 33942 / OCh 114) (Erythrobacter sp. (strain OCh 114)).